The following is a 485-amino-acid chain: Glutamyl-tRNA(Gln) amidotransferase subunit A (485 aa).

Catalysis depends on charge relay system residues Lys-78 and Ser-153. The active-site Acyl-ester intermediate is the Ser-177.

Belongs to the amidase family. GatA subfamily. In terms of assembly, heterotrimer of A, B and C subunits.

It catalyses the reaction L-glutamyl-tRNA(Gln) + L-glutamine + ATP + H2O = L-glutaminyl-tRNA(Gln) + L-glutamate + ADP + phosphate + H(+). Allows the formation of correctly charged Gln-tRNA(Gln) through the transamidation of misacylated Glu-tRNA(Gln) in organisms which lack glutaminyl-tRNA synthetase. The reaction takes place in the presence of glutamine and ATP through an activated gamma-phospho-Glu-tRNA(Gln). In Trichlorobacter lovleyi (strain ATCC BAA-1151 / DSM 17278 / SZ) (Geobacter lovleyi), this protein is Glutamyl-tRNA(Gln) amidotransferase subunit A.